The sequence spans 596 residues: Beta-fructofuranosidase, insoluble isoenzyme 6 (596 aa).

The N-terminal stretch at 1–25 (MALAGLPLSVFAIAVHFCLVFSSSS) is a signal peptide. Substrate-binding positions include 49–52 (WQND), Gln-68, and Trp-76. The active site involves Asp-52. A glycan (N-linked (GlcNAc...) asparagine) is linked at Asn-80. Substrate is bound by residues 113 to 114 (AS), 177 to 178 (RD), and Glu-232. N-linked (GlcNAc...) asparagine glycosylation is present at Asn-335. Cys-436 and Cys-482 are disulfide-bonded. The N-linked (GlcNAc...) asparagine glycan is linked to Asn-556.

The protein belongs to the glycosyl hydrolase 32 family. As to expression, expressed in roots. Weakly expressed in flowers.

It localises to the secreted. Its subcellular location is the extracellular space. The protein localises to the apoplast. The protein resides in the cell wall. The catalysed reaction is Hydrolysis of terminal non-reducing beta-D-fructofuranoside residues in beta-D-fructofuranosides.. This chain is Beta-fructofuranosidase, insoluble isoenzyme 6 (CIN6), found in Oryza sativa subsp. japonica (Rice).